A 415-amino-acid polypeptide reads, in one-letter code: UDP-galactose transporter homolog 1 (415 aa).

Positions 1 to 39 are disordered; the sequence is MHLVPEGSESMSTQQNGSAQKPVTLNGSASTKGQAPEAP. Residues 9-33 are compositionally biased toward polar residues; that stretch reads ESMSTQQNGSAQKPVTLNGSASTKG. N-linked (GlcNAc...) asparagine glycans are attached at residues N16 and N26. The next 5 helical transmembrane spans lie at 45 to 65, 95 to 115, 132 to 152, 161 to 181, and 185 to 205; these read LIQLAICVLGIYASFLSWGVL, IVLNTIQSTFAAITGFLYLYF, ILFPLLLVSISSSLASPFGYA, TFILAKSCKLLPVMFLHLTIF, and YPLYKYGVVLLVTLGVATFTL. Residue N221 is glycosylated (N-linked (GlcNAc...) asparagine). The chain crosses the membrane as a helical span at residues 223–243; the sequence is SGSSLYGIFLLSINLLLDGLT. Residue N244 is glycosylated (N-linked (GlcNAc...) asparagine). A run of 3 helical transmembrane segments spans residues 281 to 301, 325 to 345, and 368 to 388; these read LLVMPHLSSTGALHALLPIPI, NVLGFAACGAIGQLFIFYTLS, and VFWFGHTLSAGQWLGIGLVFG.

The protein belongs to the nucleotide-sugar transporter family. SLC35B subfamily.

It is found in the endoplasmic reticulum membrane. Its function is as follows. May be involved in specific transport of UDP-Gal from the cytosol to the Golgi lumen. Involved in the maintenance of optimal conditions for the folding of secretory pathway proteins in the endoplasmic reticulum. This chain is UDP-galactose transporter homolog 1 (hut1), found in Aspergillus fumigatus (strain ATCC MYA-4609 / CBS 101355 / FGSC A1100 / Af293) (Neosartorya fumigata).